The primary structure comprises 81 residues: Mipartoxin-1A (81 aa).

A signal peptide spans 1 to 21; it reads MKTLLLTLVVVTIVCLDLGNS. Intrachain disulfides connect Cys-24/Cys-42, Cys-35/Cys-61, Cys-65/Cys-73, and Cys-74/Cys-79.

The protein belongs to the three-finger toxin family. Short-chain subfamily. As to expression, expressed by the venom gland.

Its subcellular location is the secreted. Its function is as follows. Snake venom neurotoxin that blocks neuromuscular transmission, presenting a postsynaptic action through the nicotinic acetylcholine receptor (nAChR). Has no cytotoxic activity. This Micrurus mipartitus (Red-tailed coral snake) protein is Mipartoxin-1A.